Consider the following 65-residue polypeptide: Large ribosomal subunit protein bL35 (65 aa).

A disordered region spans residues 24–48; sequence RRKAGKSHLLEHKSSDKKRSMSKTT. A compositionally biased stretch (basic and acidic residues) spans 31-42; the sequence is HLLEHKSSDKKR.

Belongs to the bacterial ribosomal protein bL35 family.

In Nostoc punctiforme (strain ATCC 29133 / PCC 73102), this protein is Large ribosomal subunit protein bL35.